Consider the following 177-residue polypeptide: ATP synthase subunit delta (177 aa).

This sequence belongs to the ATPase delta chain family. F-type ATPases have 2 components, F(1) - the catalytic core - and F(0) - the membrane proton channel. F(1) has five subunits: alpha(3), beta(3), gamma(1), delta(1), epsilon(1). F(0) has three main subunits: a(1), b(2) and c(10-14). The alpha and beta chains form an alternating ring which encloses part of the gamma chain. F(1) is attached to F(0) by a central stalk formed by the gamma and epsilon chains, while a peripheral stalk is formed by the delta and b chains.

The protein resides in the cell inner membrane. Functionally, f(1)F(0) ATP synthase produces ATP from ADP in the presence of a proton or sodium gradient. F-type ATPases consist of two structural domains, F(1) containing the extramembraneous catalytic core and F(0) containing the membrane proton channel, linked together by a central stalk and a peripheral stalk. During catalysis, ATP synthesis in the catalytic domain of F(1) is coupled via a rotary mechanism of the central stalk subunits to proton translocation. This protein is part of the stalk that links CF(0) to CF(1). It either transmits conformational changes from CF(0) to CF(1) or is implicated in proton conduction. The sequence is that of ATP synthase subunit delta from Aliivibrio salmonicida (strain LFI1238) (Vibrio salmonicida (strain LFI1238)).